We begin with the raw amino-acid sequence, 60 residues long: Prokaryotic ubiquitin-like protein UBact (60 aa).

The segment at 1–60 (MPERKTQPTTDQPWTKPNDGGDESGPRSPEVERPNTRDLLERMKRVDPRQARRYRQRSGE) is disordered. The segment covering 29-50 (PEVERPNTRDLLERMKRVDPRQ) has biased composition (basic and acidic residues). Residues 51-60 (ARRYRQRSGE) are compositionally biased toward basic residues. Residue glutamate 60 forms an Isoglutamyl lysine isopeptide (Glu-Lys) (interchain with K-? in acceptor proteins) linkage.

The protein belongs to the ubiquitin-like protein UBact family.

May function as a protein modifier covalently attached to lysine residues of substrate proteins. This may serve to target the modified proteins for degradation by proteasomes. This is Prokaryotic ubiquitin-like protein UBact from Fraserbacteria sp. (strain RBG_16_55_9).